The sequence spans 90 residues: Acylphosphatase (90 aa).

An Acylphosphatase-like domain is found at 3 to 90; sequence HYHAIITGRV…AHYQDFRIKG (88 aa). Active-site residues include arginine 18 and asparagine 36.

This sequence belongs to the acylphosphatase family.

It catalyses the reaction an acyl phosphate + H2O = a carboxylate + phosphate + H(+). The polypeptide is Acylphosphatase (acyP) (Bacillus pumilus (strain SAFR-032)).